The following is a 182-amino-acid chain: A-type ATP synthase subunit E (182 aa).

Belongs to the V-ATPase E subunit family. As to quaternary structure, has multiple subunits with at least A(3), B(3), C, D, E, F, H, I and proteolipid K(x).

It localises to the cell membrane. In terms of biological role, component of the A-type ATP synthase that produces ATP from ADP in the presence of a proton gradient across the membrane. This chain is A-type ATP synthase subunit E, found in Picrophilus torridus (strain ATCC 700027 / DSM 9790 / JCM 10055 / NBRC 100828 / KAW 2/3).